The chain runs to 147 residues: Hemoglobin subunit beta-1/2 (147 aa).

An N-acetylvaline modification is found at valine 2. Residues histidine 3–histidine 147 enclose the Globin domain. Position 13 is a phosphothreonine (threonine 13). Phosphoserine is present on serine 45. An N6-acetyllysine modification is found at lysine 60. Residue histidine 64 participates in heme b binding. Lysine 83 bears the N6-acetyllysine mark. Residue histidine 93 coordinates heme b. An S-nitrosocysteine modification is found at cysteine 94. Lysine 145 bears the N6-acetyllysine mark.

The protein belongs to the globin family. As to quaternary structure, heterotetramer of two alpha chains and two beta chains. Red blood cells.

Involved in oxygen transport from the lung to the various peripheral tissues. In Oryctolagus cuniculus (Rabbit), this protein is Hemoglobin subunit beta-1/2 (HBB1).